A 233-amino-acid polypeptide reads, in one-letter code: 3-dehydroquinate dehydratase (233 aa).

3-dehydroquinate-binding positions include 39–41 and Arg-73; that span reads EIR. Catalysis depends on His-132, which acts as the Proton donor/acceptor. Residue Lys-159 is the Schiff-base intermediate with substrate of the active site. Residues Arg-196 and Gln-219 each contribute to the 3-dehydroquinate site.

This sequence belongs to the type-I 3-dehydroquinase family. As to quaternary structure, homodimer.

It carries out the reaction 3-dehydroquinate = 3-dehydroshikimate + H2O. It functions in the pathway metabolic intermediate biosynthesis; chorismate biosynthesis; chorismate from D-erythrose 4-phosphate and phosphoenolpyruvate: step 3/7. Involved in the third step of the chorismate pathway, which leads to the biosynthesis of aromatic amino acids. Catalyzes the cis-dehydration of 3-dehydroquinate (DHQ) and introduces the first double bond of the aromatic ring to yield 3-dehydroshikimate. This is 3-dehydroquinate dehydratase from Methanococcoides burtonii (strain DSM 6242 / NBRC 107633 / OCM 468 / ACE-M).